Consider the following 230-residue polypeptide: Large ribosomal subunit protein uL1 (230 aa).

Belongs to the universal ribosomal protein uL1 family. As to quaternary structure, part of the 50S ribosomal subunit.

Functionally, binds directly to 23S rRNA. The L1 stalk is quite mobile in the ribosome, and is involved in E site tRNA release. Protein L1 is also a translational repressor protein, it controls the translation of the L11 operon by binding to its mRNA. This is Large ribosomal subunit protein uL1 from Desulfitobacterium hafniense (strain DSM 10664 / DCB-2).